The primary structure comprises 442 residues: Protein PRRC1-A (442 aa).

The tract at residues 1 to 27 (MMEESGIETTPPSTPPPSTIGTSVPAA) is disordered.

The protein belongs to the PRRC1 family.

The protein localises to the golgi apparatus. The chain is Protein PRRC1-A (prrc1-a) from Xenopus laevis (African clawed frog).